A 380-amino-acid chain; its full sequence is Cytochrome b (380 aa).

The next 4 membrane-spanning stretches (helical) occupy residues 33 to 53 (FGSL…FLAM), 77 to 98 (WMIR…FLHI), 113 to 133 (WNIG…GYVL), and 178 to 198 (FFTL…LHLL). Heme b-binding residues include H83 and H97. Positions 182 and 196 each coordinate heme b. H201 contacts a ubiquinone. 4 helical membrane passes run 226 to 246 (IKDI…TLLS), 288 to 308 (LGGV…PALH), 320 to 340 (LSQF…WIGG), and 347 to 367 (FITI…LLMP).

The protein belongs to the cytochrome b family. In terms of assembly, the cytochrome bc1 complex contains 11 subunits: 3 respiratory subunits (MT-CYB, CYC1 and UQCRFS1), 2 core proteins (UQCRC1 and UQCRC2) and 6 low-molecular weight proteins (UQCRH/QCR6, UQCRB/QCR7, UQCRQ/QCR8, UQCR10/QCR9, UQCR11/QCR10 and a cleavage product of UQCRFS1). This cytochrome bc1 complex then forms a dimer. Requires heme b as cofactor.

It is found in the mitochondrion inner membrane. Component of the ubiquinol-cytochrome c reductase complex (complex III or cytochrome b-c1 complex) that is part of the mitochondrial respiratory chain. The b-c1 complex mediates electron transfer from ubiquinol to cytochrome c. Contributes to the generation of a proton gradient across the mitochondrial membrane that is then used for ATP synthesis. The protein is Cytochrome b (MT-CYB) of Pongo abelii (Sumatran orangutan).